A 194-amino-acid polypeptide reads, in one-letter code: MAGRSSASSALLYGPRGFDLPFSRSMRLERETPSVSATAFIANRPSATRSAAISVFLSPLWKGLRGGFRPPSSCDRACAPTPGRDPPVSSLPNSRQPARQNPRLQHLPRSRACATDKANWAPRMTASGRRYRLAGFKTLLNDCQLLLGCPPPARDITRQQFNVSIVVRHKPVLKPVLEPFCLCRLSGRNGGQFI.

The disordered stretch occupies residues 73 to 103; the sequence is SCDRACAPTPGRDPPVSSLPNSRQPARQNPR. The span at 90–103 shows a compositional bias: polar residues; the sequence is SLPNSRQPARQNPR.

The protein is Insertion element IS136 uncharacterized 21.2 kDa protein of Agrobacterium tumefaciens (strain T37).